A 116-amino-acid chain; its full sequence is Ribosome-binding factor A (116 aa).

The protein belongs to the RbfA family. Monomer. Binds 30S ribosomal subunits, but not 50S ribosomal subunits or 70S ribosomes.

The protein localises to the cytoplasm. In terms of biological role, one of several proteins that assist in the late maturation steps of the functional core of the 30S ribosomal subunit. Associates with free 30S ribosomal subunits (but not with 30S subunits that are part of 70S ribosomes or polysomes). Required for efficient processing of 16S rRNA. May interact with the 5'-terminal helix region of 16S rRNA. The protein is Ribosome-binding factor A of Streptococcus pneumoniae (strain ATCC 700669 / Spain 23F-1).